A 424-amino-acid polypeptide reads, in one-letter code: UDP-galactose transporter homolog 1 (424 aa).

Transmembrane regions (helical) follow at residues 57–77 (LWQLAFCVAGIYASFLSWGVL), 107–127 (IVLNTIQSTFAAVTGFLYLYF), 144–164 (IIFPLVLVSISSSLASPFGYA), 173–193 (TFILAKSCKLLPVMFLHLTIF), 197–217 (YPLYKYGVVLLVTLGVATFTL), and 234–254 (TSGSSAWGIFLLSINLLLDGL). A glycan (N-linked (GlcNAc...) asparagine) is linked at N256. Helical transmembrane passes span 293-313 (LLIMPHLSSTGILHAILPVPI), 337-357 (SVLGFAAFGAMGQLFIFYTLS), and 380-400 (VFWFGHSLSAGQWLGIGLVFG).

Belongs to the nucleotide-sugar transporter family. SLC35B subfamily.

The protein resides in the endoplasmic reticulum membrane. Functionally, may be involved in specific transport of UDP-Gal from the cytosol to the Golgi lumen. Involved in the maintenance of optimal conditions for the folding of secretory pathway proteins in the endoplasmic reticulum. The polypeptide is UDP-galactose transporter homolog 1 (hut1) (Emericella nidulans (strain FGSC A4 / ATCC 38163 / CBS 112.46 / NRRL 194 / M139) (Aspergillus nidulans)).